Consider the following 195-residue polypeptide: Imidazoleglycerol-phosphate dehydratase (195 aa).

Belongs to the imidazoleglycerol-phosphate dehydratase family.

The protein localises to the cytoplasm. It catalyses the reaction D-erythro-1-(imidazol-4-yl)glycerol 3-phosphate = 3-(imidazol-4-yl)-2-oxopropyl phosphate + H2O. The protein operates within amino-acid biosynthesis; L-histidine biosynthesis; L-histidine from 5-phospho-alpha-D-ribose 1-diphosphate: step 6/9. The sequence is that of Imidazoleglycerol-phosphate dehydratase from Thermotoga petrophila (strain ATCC BAA-488 / DSM 13995 / JCM 10881 / RKU-1).